The chain runs to 334 residues: Catabolite repressor/activator (334 aa).

One can recognise an HTH lacI-type domain in the interval M1–A58. The H-T-H motif DNA-binding region spans L3 to N22.

Homotetramer.

Global transcriptional regulator, which plays an important role in the regulation of carbon metabolism. The protein is Catabolite repressor/activator (cra) of Escherichia coli O157:H7.